The chain runs to 201 residues: Pyridoxine/pyridoxamine 5'-phosphate oxidase (201 aa).

Residues 49 to 54, 64 to 65, K71, and Q93 contribute to the FMN site; these read RMVLLK and YT. K54 lines the substrate pocket. Residues Y111, R115, and S119 each contribute to the substrate site. FMN contacts are provided by residues 128–129 and W172; that span reads QS. 178-180 is a substrate binding site; sequence RLH. Position 182 (R182) interacts with FMN.

Belongs to the pyridoxamine 5'-phosphate oxidase family. In terms of assembly, homodimer. Requires FMN as cofactor.

It carries out the reaction pyridoxamine 5'-phosphate + O2 + H2O = pyridoxal 5'-phosphate + H2O2 + NH4(+). The catalysed reaction is pyridoxine 5'-phosphate + O2 = pyridoxal 5'-phosphate + H2O2. It functions in the pathway cofactor metabolism; pyridoxal 5'-phosphate salvage; pyridoxal 5'-phosphate from pyridoxamine 5'-phosphate: step 1/1. The protein operates within cofactor metabolism; pyridoxal 5'-phosphate salvage; pyridoxal 5'-phosphate from pyridoxine 5'-phosphate: step 1/1. Functionally, catalyzes the oxidation of either pyridoxine 5'-phosphate (PNP) or pyridoxamine 5'-phosphate (PMP) into pyridoxal 5'-phosphate (PLP). This is Pyridoxine/pyridoxamine 5'-phosphate oxidase from Roseobacter denitrificans (strain ATCC 33942 / OCh 114) (Erythrobacter sp. (strain OCh 114)).